The primary structure comprises 405 residues: Cytoplasmic tRNA 2-thiolation protein 2 (405 aa).

The protein belongs to the CTU2/NCS2 family.

It is found in the cytoplasm. It functions in the pathway tRNA modification; 5-methoxycarbonylmethyl-2-thiouridine-tRNA biosynthesis. Plays a central role in 2-thiolation of mcm(5)S(2)U at tRNA wobble positions of tRNA(Lys), tRNA(Glu) and tRNA(Gln). May act by forming a heterodimer with NCS6/CTU1 that ligates sulfur from thiocarboxylated URM1 onto the uridine of tRNAs at wobble position. The sequence is that of Cytoplasmic tRNA 2-thiolation protein 2 from Drosophila simulans (Fruit fly).